A 464-amino-acid chain; its full sequence is Multifunctional dye peroxidase DyP2 (464 aa).

The active-site Proton acceptor is Asp203. Positions 258, 273, and 284 each coordinate Mn(2+). Heme is bound at residue His321.

The protein belongs to the DyP-type peroxidase family. In terms of assembly, exists both as a monomeric and oligomeric species in solution; the monomeric form contains no bound heme cofactor and is inactive. The cofactor is heme b. It depends on Mn(2+) as a cofactor.

It localises to the secreted. It catalyses the reaction 1-(4-hydroxy-3-methoxyphenyl)-2-(2-methoxyphenoxy)propane-1,3-diol + H2O2 = guaiacol + vanillin + glycolaldehyde + H2O. The catalysed reaction is 2 Mn(2+) + H2O2 + 2 H(+) = 2 Mn(3+) + 2 H2O. The enzyme catalyses 2 a phenolic donor + H2O2 = 2 a phenolic radical donor + 2 H2O. It carries out the reaction Reactive Blue 5 + 2 H2O2 = 2,2'-disulfonyl azobenzene + 3-[(4-amino-6-chloro-1,3,5-triazin-2-yl)amino]benzenesulfonate + phthalate + 2 H2O + 2 H(+). Displays both high peroxidase and manganese peroxidase activity. Is likely involved in lignin degradation. Also has a Mn-dependent oxidase mode of action that expands its substrate scope in vitro; is thus able to catalyze the O(2)- and Mn-dependent oxidative decarboxylation of 4-methoxymandelate to anisaldehyde. The chain is Multifunctional dye peroxidase DyP2 from Amycolatopsis sp. (strain ATCC 39116 / 75iv2).